Consider the following 477-residue polypeptide: Probable F-box protein At5g25300 (477 aa).

The stretch at 346–377 forms a coiled coil; it reads VDMNKEDSQIEINEKETKINQEHDQSDETQAK. An F-box domain is found at 412–458; sequence SPPWSELPGDILRSVFERLSFVDFQRAKQTCPIKRSKSNCLRLWLIT.

The protein is Probable F-box protein At5g25300 of Arabidopsis thaliana (Mouse-ear cress).